We begin with the raw amino-acid sequence, 2395 residues long: Helicase ssl-1 (2395 aa).

Residues 1–12 are compositionally biased toward low complexity; sequence MPATPVRASSTR. Positions 1 to 62 are disordered; it reads MPATPVRASS…EKKKKKTSDD (62 aa). The region spanning 227 to 300 is the HSA domain; that stretch reads LPKCVEPERN…IKEKRKMCAG (74 aa). The segment covering 354–363 has biased composition (polar residues); that stretch reads LVSSSKSPSI. Disordered stretches follow at residues 354–404 and 444–504; these read LVSS…VRQE and EKLE…HGVL. Basic and acidic residues-rich tracts occupy residues 365–375, 394–404, and 444–462; these read SDRDDKDEEFK, KSQKKEDVRQE, and EKLEEQKARKEACGDNEEK. Residues 388-464 adopt a coiled-coil conformation; sequence TIANAEKSQK…ACGDNEEKME (77 aa). Residues 470–490 are compositionally biased toward polar residues; that stretch reads SSDAQKPSTSSSDLTAEQLQD. Residues 570–735 form the Helicase ATP-binding domain; it reads VTLYEKNLNG…WSLMHFLMPT (166 aa). 583–590 provides a ligand contact to ATP; sequence DEMGLGKT. The disordered stretch occupies residues 963–982; the sequence is AQPLQNGNSIPQNAPNRPQT. The Helicase C-terminal domain occupies 1196-1342; the sequence is LLRQLYLYKH…ELAIDEAGFT (147 aa). A coiled-coil region spans residues 1452-1476; sequence KPEFEEECKEAEALIDQKREEWDKN. 5 disordered regions span residues 1615 to 1706, 1977 to 2073, 2092 to 2143, 2276 to 2306, and 2350 to 2395; these read ESAA…EEPD, SIQH…RRNA, QSGK…PQQR, QMRSNNGGGVGGQGGLQGGPGGPQGIRRPLV, and MQMP…PPQN. Low complexity-rich tracts occupy residues 1647–1669 and 1981–1995; these read QQPTTTATTTTTVPQQQQQQQQQ and LQSSSTGLGSQQNLQ. Positions 1996 to 2019 are enriched in polar residues; the sequence is NSHNSEQRNNVQNMHQNQYNSSQN. Low complexity-rich tracts occupy residues 2051-2073 and 2092-2114; these read LVQQGSQQQQQQQQQATLQRRNA and QSGKNCGQGQSFVVMGSQSSSND. The segment covering 2115–2129 has biased composition (gly residues); that stretch reads GQGGASTVGGGGGGS. Residues 2130–2142 are compositionally biased toward low complexity; the sequence is QQPHQQQQQQPQQ. Over residues 2281–2299 the composition is skewed to gly residues; that stretch reads NGGGVGGQGGLQGGPGGPQ. Over residues 2361–2377 the composition is skewed to low complexity; sequence QQQAPPQSSQQASQQAP.

Belongs to the SNF2/RAD54 helicase family. SWR1 subfamily.

It localises to the nucleus. In terms of biological role, probable catalytic component of a chromatin-remodeling complex which mediates the ATP-dependent exchange of histone H2A variant H2AV/htz-1 for H2A, leading to transcriptional regulation of selected genes by chromatin remodeling. Involved in foregut development, and may be involved in vulval development. This chain is Helicase ssl-1 (ssl-1), found in Caenorhabditis elegans.